A 1419-amino-acid chain; its full sequence is L-2-aminoadipate reductase (1419 aa).

The Carrier domain occupies 880 to 956; sequence ETLTATERDI…GLAKEIERMK (77 aa). S916 bears the O-(pantetheine 4'-phosphoryl)serine mark.

It belongs to the ATP-dependent AMP-binding enzyme family. The cofactor is pantetheine 4'-phosphate.

The protein resides in the cytoplasm. It catalyses the reaction (S)-2-amino-6-oxohexanoate + NADP(+) + H2O = L-2-aminoadipate + NADPH + 2 H(+). It carries out the reaction (S)-2-amino-6-oxohexanoate + NAD(+) + H2O = L-2-aminoadipate + NADH + 2 H(+). The enzyme catalyses (S)-2-amino-6-oxohexanoate + AMP + diphosphate + NADP(+) = L-2-aminoadipate + ATP + NADPH + H(+). Its pathway is amino-acid biosynthesis; L-lysine biosynthesis via AAA pathway; L-lysine from L-alpha-aminoadipate (fungal route): step 1/3. Catalyzes the activation of alpha-aminoadipate by ATP-dependent adenylation and the reduction of activated alpha-aminoadipate by NADPH. The activated alpha-aminoadipate is bound to the phosphopantheinyl group of the enzyme itself before it is reduced to (S)-2-amino-6-oxohexanoate. The chain is L-2-aminoadipate reductase (lys1) from Schizosaccharomyces pombe (strain 972 / ATCC 24843) (Fission yeast).